A 408-amino-acid polypeptide reads, in one-letter code: Serine/threonine transporter SstT (408 aa).

Transmembrane regions (helical) follow at residues 15 to 35 (MGLIPQITIGIIAGVLLAVIW), 49 to 69 (FISALKAVAPILVFALVTAAI), 85 to 105 (LLYVIGTLVAAVVAVIASFVF), 142 to 162 (ALMEGNFIAILAWAVGLGLML), 192 to 212 (PLGIFGLVANTLADAGIGALL), 218 to 238 (LAVIVGCMLFVALVTNPLIVF), 246 to 268 (YPLVFACLRGSAITAFFTRSSAA), 289 to 309 (ISIPLGATINMAGAAITISVI), 317 to 337 (LGIPVDFPTALLLCVVSSIAA), and 362 to 382 (TEVAMQVVAIGFVISVVQDST).

The protein belongs to the dicarboxylate/amino acid:cation symporter (DAACS) (TC 2.A.23) family.

It localises to the cell inner membrane. The catalysed reaction is L-serine(in) + Na(+)(in) = L-serine(out) + Na(+)(out). It catalyses the reaction L-threonine(in) + Na(+)(in) = L-threonine(out) + Na(+)(out). In terms of biological role, involved in the import of serine and threonine into the cell, with the concomitant import of sodium (symport system). The chain is Serine/threonine transporter SstT from Marinobacter nauticus (strain ATCC 700491 / DSM 11845 / VT8) (Marinobacter aquaeolei).